We begin with the raw amino-acid sequence, 241 residues long: Queuine tRNA-ribosyltransferase-like protein (241 aa).

This sequence belongs to the queuine tRNA-ribosyltransferase family.

The chain is Queuine tRNA-ribosyltransferase-like protein from Plasmodium falciparum.